A 96-amino-acid chain; its full sequence is Large ribosomal subunit protein uL23 (96 aa).

Belongs to the universal ribosomal protein uL23 family. As to quaternary structure, part of the 50S ribosomal subunit. Contacts protein L29, and trigger factor when it is bound to the ribosome.

Functionally, one of the early assembly proteins it binds 23S rRNA. One of the proteins that surrounds the polypeptide exit tunnel on the outside of the ribosome. Forms the main docking site for trigger factor binding to the ribosome. The sequence is that of Large ribosomal subunit protein uL23 from Caldanaerobacter subterraneus subsp. tengcongensis (strain DSM 15242 / JCM 11007 / NBRC 100824 / MB4) (Thermoanaerobacter tengcongensis).